A 369-amino-acid polypeptide reads, in one-letter code: Glutamate 5-kinase (369 aa).

K10 provides a ligand contact to ATP. 3 residues coordinate substrate: S50, D137, and N149. Residues 169–170 (TD) and 210–216 (TGGMVTK) each bind ATP. The 74-residue stretch at 276 to 349 (EGSIFIDEGA…GKHSEEMLAT (74 aa)) folds into the PUA domain.

Belongs to the glutamate 5-kinase family.

It localises to the cytoplasm. It carries out the reaction L-glutamate + ATP = L-glutamyl 5-phosphate + ADP. The protein operates within amino-acid biosynthesis; L-proline biosynthesis; L-glutamate 5-semialdehyde from L-glutamate: step 1/2. Catalyzes the transfer of a phosphate group to glutamate to form L-glutamate 5-phosphate. This is Glutamate 5-kinase from Desulfitobacterium hafniense (strain Y51).